Consider the following 702-residue polypeptide: Ribosomal RNA large subunit methyltransferase K/L (702 aa).

The THUMP domain occupies 43–154; it reads LIYQSLMWSR…KETASIALDL (112 aa).

It belongs to the methyltransferase superfamily. RlmKL family.

Its subcellular location is the cytoplasm. It carries out the reaction guanosine(2445) in 23S rRNA + S-adenosyl-L-methionine = N(2)-methylguanosine(2445) in 23S rRNA + S-adenosyl-L-homocysteine + H(+). The enzyme catalyses guanosine(2069) in 23S rRNA + S-adenosyl-L-methionine = N(2)-methylguanosine(2069) in 23S rRNA + S-adenosyl-L-homocysteine + H(+). In terms of biological role, specifically methylates the guanine in position 2445 (m2G2445) and the guanine in position 2069 (m7G2069) of 23S rRNA. The protein is Ribosomal RNA large subunit methyltransferase K/L of Salmonella schwarzengrund (strain CVM19633).